The primary structure comprises 696 residues: Elongation factor G (696 aa).

Residues 8–286 (EDVRNIGIAA…AVVHYLPSPV (279 aa)) form the tr-type G domain. GTP contacts are provided by residues 17–24 (AHIDAGKT), 81–85 (DTPGH), and 135–138 (NKMD).

This sequence belongs to the TRAFAC class translation factor GTPase superfamily. Classic translation factor GTPase family. EF-G/EF-2 subfamily.

It is found in the cytoplasm. Functionally, catalyzes the GTP-dependent ribosomal translocation step during translation elongation. During this step, the ribosome changes from the pre-translocational (PRE) to the post-translocational (POST) state as the newly formed A-site-bound peptidyl-tRNA and P-site-bound deacylated tRNA move to the P and E sites, respectively. Catalyzes the coordinated movement of the two tRNA molecules, the mRNA and conformational changes in the ribosome. This is Elongation factor G from Sulfurovum sp. (strain NBC37-1).